The following is a 291-amino-acid chain: Stomatin-like protein 3 (291 aa).

S7 is modified (phosphoserine). Residues 29–49 traverse the membrane as a helical; Signal-anchor for type III membrane protein segment; that stretch reads WILFSLSFLLVIITFPISIWM. Topologically, residues 50-291 are cytoplasmic; sequence CLKIIKEYER…DNHKKLPNKA (242 aa). At S241 the chain carries Phosphoserine.

It belongs to the band 7/mec-2 family. As to quaternary structure, homodimer. Interacts with PIEZO1 and PIEZO2.

The protein resides in the cell membrane. In terms of biological role, required for the function of many mechanoreceptors. Modulate mechanotransduction channels and acid-sensing ion channels (ASIC) proteins. Potentiates PIEZO1 and PIEZO2 function by increasing their sensitivity to mechanical stimulations. This Homo sapiens (Human) protein is Stomatin-like protein 3 (STOML3).